The primary structure comprises 126 residues: Histone H2B type 1-P (126 aa).

A disordered region spans residues Met-1 to Glu-36. Pro-2 carries the N-acetylproline modification. An ADP-ribosyl glutamic acid modification is found at Glu-3. Lys-6 carries the post-translational modification N6-(2-hydroxyisobutyryl)lysine; alternate. Lys-6 carries the N6-(beta-hydroxybutyryl)lysine; alternate modification. N6-acetyllysine; alternate is present on Lys-6. At Lys-6 the chain carries N6-butyryllysine; alternate. Residue Lys-6 is modified to N6-crotonyllysine; alternate. Lys-6 is modified (N6-lactoyllysine; alternate). Lys-6 is covalently cross-linked (Glycyl lysine isopeptide (Lys-Gly) (interchain with G-Cter in SUMO2); alternate). Residue Ser-7 is modified to ADP-ribosylserine. Lys-12 carries the N6-(beta-hydroxybutyryl)lysine; alternate modification. N6-acetyllysine; alternate is present on residues Lys-12 and Lys-13. N6-crotonyllysine; alternate occurs at positions 12 and 13. Lys-12 is modified (N6-lactoyllysine; alternate). The residue at position 13 (Lys-13) is an N6-(2-hydroxyisobutyryl)lysine; alternate. Ser-15 carries the phosphoserine; by STK4/MST1 modification. 4 positions are modified to N6-acetyllysine; alternate: Lys-16, Lys-17, Lys-21, and Lys-24. Lys-16, Lys-17, Lys-21, and Lys-24 each carry N6-crotonyllysine; alternate. An N6-lactoyllysine; alternate mark is found at Lys-16, Lys-17, Lys-21, and Lys-24. At Lys-17 the chain carries N6-glutaryllysine; alternate. 2 positions are modified to N6-(2-hydroxyisobutyryl)lysine; alternate: Lys-21 and Lys-24. Lys-21 bears the N6-(beta-hydroxybutyryl)lysine; alternate mark. Residue Lys-21 is modified to N6-butyryllysine; alternate. Residue Lys-21 forms a Glycyl lysine isopeptide (Lys-Gly) (interchain with G-Cter in SUMO2); alternate linkage. An N6-(2-hydroxyisobutyryl)lysine modification is found at Lys-25. At Lys-35 the chain carries N6-(2-hydroxyisobutyryl)lysine; alternate. Lys-35 carries the post-translational modification N6-(beta-hydroxybutyryl)lysine; alternate. Lys-35 carries the N6-crotonyllysine; alternate modification. At Lys-35 the chain carries N6-glutaryllysine; alternate. N6-succinyllysine; alternate is present on Lys-35. Residue Lys-35 forms a Glycyl lysine isopeptide (Lys-Gly) (interchain with G-Cter in ubiquitin); alternate linkage. Glu-36 is modified (polyADP-ribosyl glutamic acid). Position 37 is a phosphoserine; by AMPK (Ser-37). Residues Lys-44, Lys-47, and Lys-58 each carry the N6-(2-hydroxyisobutyryl)lysine; alternate modification. At Lys-44 the chain carries N6-lactoyllysine; alternate. 2 positions are modified to N6-glutaryllysine; alternate: Lys-44 and Lys-47. Lys-47 is subject to N6-methyllysine; alternate. At Lys-58 the chain carries N6,N6-dimethyllysine; alternate. Arg-80 is subject to Dimethylated arginine. Lys-86 carries the post-translational modification N6-(2-hydroxyisobutyryl)lysine; alternate. At Lys-86 the chain carries N6-acetyllysine; alternate. Lys-86 bears the N6-lactoyllysine; alternate mark. An N6,N6,N6-trimethyllysine; alternate modification is found at Lys-86. Residues Arg-87 and Arg-93 each carry the omega-N-methylarginine modification. Residue Lys-109 is modified to N6-(2-hydroxyisobutyryl)lysine; alternate. The residue at position 109 (Lys-109) is an N6-(beta-hydroxybutyryl)lysine; alternate. Lys-109 carries the N6-lactoyllysine; alternate modification. The residue at position 109 (Lys-109) is an N6-glutaryllysine; alternate. Lys-109 is subject to N6-methyllysine; alternate. Residue Ser-113 is glycosylated (O-linked (GlcNAc) serine). A Phosphothreonine modification is found at Thr-116. Lys-117 and Lys-121 each carry N6-(2-hydroxyisobutyryl)lysine; alternate. Residue Lys-117 is modified to N6-(beta-hydroxybutyryl)lysine; alternate. N6-lactoyllysine; alternate is present on residues Lys-117 and Lys-121. Residues Lys-117 and Lys-121 each carry the N6-glutaryllysine; alternate modification. Residues Lys-117 and Lys-121 each carry the N6-succinyllysine; alternate modification. Lys-117 bears the N6-methylated lysine; alternate mark. Lys-121 participates in a covalent cross-link: Glycyl lysine isopeptide (Lys-Gly) (interchain with G-Cter in ubiquitin); alternate.

It belongs to the histone H2B family. As to quaternary structure, the nucleosome is a histone octamer containing two molecules each of H2A, H2B, H3 and H4 assembled in one H3-H4 heterotetramer and two H2A-H2B heterodimers. The octamer wraps approximately 147 bp of DNA. Post-translationally, monoubiquitination at Lys-35 (H2BK34Ub) by the MSL1/MSL2 dimer is required for histone H3 'Lys-4' (H3K4me) and 'Lys-79' (H3K79me) methylation and transcription activation at specific gene loci, such as HOXA9 and MEIS1 loci. Similarly, monoubiquitination at Lys-121 (H2BK120Ub) by the RNF20/40 complex gives a specific tag for epigenetic transcriptional activation and is also prerequisite for histone H3 'Lys-4' and 'Lys-79' methylation. It also functions cooperatively with the FACT dimer to stimulate elongation by RNA polymerase II. H2BK120Ub also acts as a regulator of mRNA splicing: deubiquitination by USP49 is required for efficient cotranscriptional splicing of a large set of exons. In terms of processing, phosphorylated on Ser-15 (H2BS14ph) by STK4/MST1 during apoptosis; which facilitates apoptotic chromatin condensation. Also phosphorylated on Ser-15 in response to DNA double strand breaks (DSBs), and in correlation with somatic hypermutation and immunoglobulin class-switch recombination. Phosphorylation at Ser-37 (H2BS36ph) by AMPK in response to stress promotes transcription. GlcNAcylation at Ser-113 promotes monoubiquitination of Lys-121. It fluctuates in response to extracellular glucose, and associates with transcribed genes. Post-translationally, ADP-ribosylated by PARP1 or PARP2 on Ser-7 (H2BS6ADPr) in response to DNA damage. H2BS6ADPr promotes recruitment of CHD1L. Mono-ADP-ribosylated on Glu-3 (H2BE2ADPr) by PARP3 in response to single-strand breaks. Poly ADP-ribosylation on Glu-36 (H2BE35ADPr) by PARP1 regulates adipogenesis: it inhibits phosphorylation at Ser-37 (H2BS36ph), thereby blocking expression of pro-adipogenetic genes. In terms of processing, crotonylation (Kcr) is specifically present in male germ cells and marks testis-specific genes in post-meiotic cells, including X-linked genes that escape sex chromosome inactivation in haploid cells. Crotonylation marks active promoters and enhancers and confers resistance to transcriptional repressors. It is also associated with post-meiotically activated genes on autosomes. Hydroxybutyrylation of histones is induced by starvation. Post-translationally, lactylated in macrophages by EP300/P300 by using lactoyl-CoA directly derived from endogenous or exogenous lactate, leading to stimulates gene transcription.

Its subcellular location is the nucleus. The protein localises to the chromosome. Functionally, core component of nucleosome. Nucleosomes wrap and compact DNA into chromatin, limiting DNA accessibility to the cellular machineries which require DNA as a template. Histones thereby play a central role in transcription regulation, DNA repair, DNA replication and chromosomal stability. DNA accessibility is regulated via a complex set of post-translational modifications of histones, also called histone code, and nucleosome remodeling. The sequence is that of Histone H2B type 1-P (Hist1h2bp) from Mus musculus (Mouse).